The primary structure comprises 88 residues: Small ribosomal subunit protein uS15c (88 aa).

The protein belongs to the universal ribosomal protein uS15 family. In terms of assembly, part of the 30S ribosomal subunit.

It localises to the plastid. It is found in the chloroplast. This chain is Small ribosomal subunit protein uS15c (rps15), found in Lepidium virginicum (Virginia pepperweed).